We begin with the raw amino-acid sequence, 227 residues long: GFP-like non-fluorescent chromoprotein (227 aa).

The segment at residues 63–65 (EYG) is a cross-link (2-iminomethyl-5-imidazolinone (Glu-Gly)). Tyr-64 is modified (2,3-didehydrotyrosine).

Belongs to the GFP family. As to quaternary structure, homotetramer. In terms of processing, contains a chromophore consisting of modified amino acid residues. The chromophore is formed by autocatalytic backbone condensation between Xaa-N and Gly-(N+2), oxidation of Tyr-(N+1) to didehydrotyrosine, and formation of a double bond to the alpha-amino nitrogen of residue Xaa-N. Maturation of the chromophore requires nothing other than molecular oxygen. The precise stereochemistry of the tyrosine has not been determined.

In terms of biological role, non-fluorescent pigment protein that is lilac in color. The protein is GFP-like non-fluorescent chromoprotein of Radianthus crispa (Leathery sea anemone).